A 388-amino-acid chain; its full sequence is Succinate--CoA ligase [ADP-forming] subunit beta (388 aa).

An ATP-grasp domain is found at 9–244 (KQLFAEYGLP…PSQDDAREAH (236 aa)). ATP is bound by residues lysine 46, 53-55 (GRG), glutamate 99, threonine 102, and glutamate 107. Mg(2+) is bound by residues asparagine 199 and aspartate 213. Substrate-binding positions include asparagine 264 and 321–323 (GIV).

This sequence belongs to the succinate/malate CoA ligase beta subunit family. Heterotetramer of two alpha and two beta subunits. Requires Mg(2+) as cofactor.

The enzyme catalyses succinate + ATP + CoA = succinyl-CoA + ADP + phosphate. It catalyses the reaction GTP + succinate + CoA = succinyl-CoA + GDP + phosphate. It functions in the pathway carbohydrate metabolism; tricarboxylic acid cycle; succinate from succinyl-CoA (ligase route): step 1/1. Its function is as follows. Succinyl-CoA synthetase functions in the citric acid cycle (TCA), coupling the hydrolysis of succinyl-CoA to the synthesis of either ATP or GTP and thus represents the only step of substrate-level phosphorylation in the TCA. The beta subunit provides nucleotide specificity of the enzyme and binds the substrate succinate, while the binding sites for coenzyme A and phosphate are found in the alpha subunit. This chain is Succinate--CoA ligase [ADP-forming] subunit beta, found in Pseudomonas aeruginosa (strain LESB58).